Consider the following 426-residue polypeptide: Glutamyl-tRNA reductase (426 aa).

Substrate-binding positions include 49–52 (TCNR), Ser-109, 114–116 (EGQ), and Gln-120. Cys-50 acts as the Nucleophile in catalysis. 189–194 (GAGETG) is a binding site for NADP(+).

It belongs to the glutamyl-tRNA reductase family. As to quaternary structure, homodimer.

The catalysed reaction is (S)-4-amino-5-oxopentanoate + tRNA(Glu) + NADP(+) = L-glutamyl-tRNA(Glu) + NADPH + H(+). The protein operates within porphyrin-containing compound metabolism; protoporphyrin-IX biosynthesis; 5-aminolevulinate from L-glutamyl-tRNA(Glu): step 1/2. It participates in porphyrin-containing compound metabolism; chlorophyll biosynthesis. Its function is as follows. Catalyzes the NADPH-dependent reduction of glutamyl-tRNA(Glu) to glutamate 1-semialdehyde (GSA). The chain is Glutamyl-tRNA reductase from Prosthecochloris aestuarii (strain DSM 271 / SK 413).